A 310-amino-acid polypeptide reads, in one-letter code: Ribonuclease HIII (310 aa).

Residues 91 to 307 (YNCIGSDEAG…REKAQNLVTK (217 aa)) form the RNase H type-2 domain. Positions 97, 98, and 202 each coordinate a divalent metal cation.

This sequence belongs to the RNase HII family. RnhC subfamily. It depends on Mn(2+) as a cofactor. Requires Mg(2+) as cofactor.

The protein resides in the cytoplasm. The catalysed reaction is Endonucleolytic cleavage to 5'-phosphomonoester.. Functionally, endonuclease that specifically degrades the RNA of RNA-DNA hybrids. The chain is Ribonuclease HIII from Staphylococcus haemolyticus (strain JCSC1435).